Consider the following 957-residue polypeptide: Glycine dehydrogenase (decarboxylating) (957 aa).

Position 708 is an N6-(pyridoxal phosphate)lysine (K708).

It belongs to the GcvP family. As to quaternary structure, the glycine cleavage system is composed of four proteins: P, T, L and H. It depends on pyridoxal 5'-phosphate as a cofactor.

It catalyses the reaction N(6)-[(R)-lipoyl]-L-lysyl-[glycine-cleavage complex H protein] + glycine + H(+) = N(6)-[(R)-S(8)-aminomethyldihydrolipoyl]-L-lysyl-[glycine-cleavage complex H protein] + CO2. The glycine cleavage system catalyzes the degradation of glycine. The P protein binds the alpha-amino group of glycine through its pyridoxal phosphate cofactor; CO(2) is released and the remaining methylamine moiety is then transferred to the lipoamide cofactor of the H protein. The chain is Glycine dehydrogenase (decarboxylating) from Cronobacter sakazakii (strain ATCC BAA-894) (Enterobacter sakazakii).